We begin with the raw amino-acid sequence, 409 residues long: MDWGLAISSHPKPYSVTTGGNLWRSKHTTKNIYFASSWISKASRHKRETQIEHNVLRFQQPSLDHHYKCIRGGSTYQECNRKFVVKAISKQPLGFEAHASNPKNILDSVKNVLSAFYWFSYPYTMIGITLCAFSSSLLAVEKLSDISLSFLIGVLQGVLPQLFIEIYLCGVNQLYDLEIDKINKPHLPMASGQFSFKTGVIISAAFLALSFGFTWITGSWPLICNLVVIASSWTAYSIDVPLLRWKRYPFVAAMCMISTWALALPISYFHHMQTVVLKRPIGFPRSLGFLVAFMTFYSLGLALSKDIPDVEGDKEHGIDSFAVRLGQKRAFWICVSFFEMAFGVGILAGASCSHFWTKIFTGMGNAVLASILWYQAKSVDLSDKASTGSFYMFIWKLLYAGFFLMALIR.

The N-terminal 44 residues, 1 to 44, are a transit peptide targeting the chloroplast; the sequence is MDWGLAISSHPKPYSVTTGGNLWRSKHTTKNIYFASSWISKASR. 9 helical membrane passes run 113-133, 148-168, 200-220, 222-242, 249-269, 287-307, 330-350, 354-374, and 388-408; these read LSAF…LCAF, LSFL…EIYL, VIIS…TGSW, LICN…DVPL, PFVA…ISYF, LGFL…SKDI, AFWI…LAGA, HFWT…ILWY, and GSFY…MALI.

This sequence belongs to the UbiA prenyltransferase family. Mg(2+) is required as a cofactor. Requires Mn(2+) as cofactor. Co(2+) serves as cofactor.

It is found in the plastid. The protein resides in the chloroplast membrane. It carries out the reaction (6aS,11aS)-3,6a,9-trihydroxypterocarpan + dimethylallyl diphosphate = (6aS,11aS)-2-dimethylallyl-3,6a,9-trihydroxypterocarpan + diphosphate. It catalyses the reaction (6aS,11aS)-3,6a,9-trihydroxypterocarpan + dimethylallyl diphosphate = (6aS,11aS)-4-dimethylallyl-3,6a,9-trihydroxypterocarpan + diphosphate. It participates in phytoalexin biosynthesis; pterocarpan phytoalexin biosynthesis. In terms of biological role, proposed to be involved in the biosynthesis of pterocarpan phytoalexins, specifically glyceollins. Can act as a prenyltransferase towards glycinol which is the direct precursor of glyceollins. Seems to be specific for prenylation at C-4 thus producing glyceollin I. This is Glycinol 4-dimethylallyltransferase (G4DT) from Glycine max (Soybean).